The primary structure comprises 150 residues: MPKYYCDYCKSYLTHDTMSVRKSHLQGRNHIKFYCDYYEAKAKETNIWNPSSIPYEITLEKLNRYSDAKKSNGSSEDNMDIDKKENSSDHNKGNVVNHSDAGNDNDDDDDEMIFLPPPPNLSGLPLPTAAVYNNQKEYQKAILRQTLTKS.

The Matrin-type zinc-finger motif lies at 4-36 (YYCDYCKSYLTHDTMSVRKSHLQGRNHIKFYCD). The interval 66–127 (SDAKKSNGSS…PPNLSGLPLP (62 aa)) is disordered. A compositionally biased stretch (basic and acidic residues) spans 80-92 (DIDKKENSSDHNK). Residues 103–112 (NDNDDDDDEM) show a composition bias toward acidic residues.

This sequence belongs to the U1 small nuclear ribonucleoprotein C family. As to quaternary structure, U1 snRNP is composed of the 7 core Sm proteins B/B', D1, D2, D3, E, F and G that assemble in a heptameric protein ring on the Sm site of the small nuclear RNA to form the core snRNP, and at least 3 U1 snRNP-specific proteins U1-70K, U1-A and U1-C. U1-C interacts with U1 snRNA and the 5' splice-site region of the pre-mRNA.

The protein resides in the nucleus. Component of the spliceosomal U1 snRNP, which is essential for recognition of the pre-mRNA 5' splice-site and the subsequent assembly of the spliceosome. U1-C is directly involved in initial 5' splice-site recognition for both constitutive and regulated alternative splicing. The interaction with the 5' splice-site seems to precede base-pairing between the pre-mRNA and the U1 snRNA. Stimulates commitment or early (E) complex formation by stabilizing the base pairing of the 5' end of the U1 snRNA and the 5' splice-site region. In Candida albicans (strain WO-1) (Yeast), this protein is U1 small nuclear ribonucleoprotein C.